The sequence spans 469 residues: Peripherin (469 aa).

2 stretches are compositionally biased toward low complexity: residues 1–18 and 27–53; these read MSHP…SYRR and SPGA…PGSS. Positions 1–60 are disordered; that stretch reads MSHPSGLRSSVSSTSYRRTFGPPPSLSPGAFSYSSSSRFSSSRLLGSASPGSSVRLGSFR. Residues 1–98 form a head region; it reads MSHPSGLRSS…FLATRSNEKQ (98 aa). Position 16 is a 3'-nitrotyrosine (Y16). 3 positions are modified to phosphoserine: S27, S49, and S58. Residues 96-406 form the IF rod domain; that stretch reads EKQELQELND…KLLEGEESRI (311 aa). Residues 99 to 131 are coil 1A; it reads ELQELNDRFANFIEKVRFLEQQNAALRGELNQA. A linker 1 region spans residues 132–142; it reads RGQEPARADQL. Residues 143 to 238 form a coil 1B region; it reads CQQELRELRR…KLHEEELRDL (96 aa). The tract at residues 239-261 is linker 2; sequence QLSVESQQVQHVEVEATVKPELT. Residues 262–404 are coil 2; sequence AALRDIRAQY…YRKLLEGEES (143 aa). Residue Y378 is modified to 3'-nitrotyrosine. The interval 405-469 is tail; sequence RISVPVHSFA…SELDKSPQSY (65 aa). Positions 447-469 are disordered; the sequence is GEQVVTESQKEQHSELDKSPQSY. Y469 is modified (phosphotyrosine).

It belongs to the intermediate filament family. Forms homodimers (in vitro). Homopolymerizes into a filamentous network (in vitro). Forms heterodimers with NEFL, NEFM or NEFH (in vitro). Interacts with DST (via C-terminus). Interacts with RAB7A; the interaction is direct. Interacts with PRKCE (via phorbol-ester/DAG-type 2 domain). Phosphorylated; phosphorylation increases after nerve injury in regenerating neurons.

It is found in the cytoplasm. The protein localises to the cytoskeleton. The protein resides in the cell projection. Its subcellular location is the axon. It localises to the perikaryon. Functionally, class-III neuronal intermediate filament protein. May form an independent structural network without the involvement of other neurofilaments or may cooperate with the neuronal intermediate filament proteins NEFL, NEFH, NEFM and INA to form a filamentous network. Assembly of the neuronal intermediate filaments may be regulated by RAB7A. Plays a role in the development of unmyelinated sensory neurons. May be involved in axon elongation and axon regeneration after injury. Inhibits neurite extension in type II spiral ganglion neurons in the cochlea. This chain is Peripherin (PRPH), found in Bos taurus (Bovine).